The following is a 231-amino-acid chain: MMTTLTARPEAITFDPQQSALIVVDMQNAYATPGGYLDLAGFDVSTTRPVIANIQTAVTAARAAGMLIIWFQNGWDEQYVEAGGPGSPNFHKSNALKTMRKQPQLQGKLLAKGSWDYQLVDELVPQPGDIVLPKPRYSGFFNTPLDSILRSRGIRHLVFTGIATNVCVESTLRDGFFLEYFGVVLEDATHQAGPEFVQKAALFNIETFFGWVSDVETFCDALSPTSFARIA.

D25 functions as the Proton acceptor in the catalytic mechanism. Residue K134 is part of the active site. C167 (nucleophile) is an active-site residue.

This sequence belongs to the isochorismatase family. RutB subfamily.

It carries out the reaction (Z)-3-ureidoacrylate + H2O + H(+) = (Z)-3-aminoacrylate + NH4(+) + CO2. The enzyme catalyses (Z)-3-ureidoacrylate + H2O = (Z)-3-aminoacrylate + carbamate + H(+). It catalyses the reaction (Z)-2-methylureidoacrylate + H2O + H(+) = (Z)-2-methylaminoacrylate + NH4(+) + CO2. Hydrolyzes ureidoacrylate to form aminoacrylate and carbamate. The carbamate hydrolyzes spontaneously, thereby releasing one of the nitrogen atoms of the pyrimidine ring as ammonia and one of its carbon atoms as CO2. The sequence is that of Ureidoacrylate amidohydrolase RutB from Escherichia coli O139:H28 (strain E24377A / ETEC).